The sequence spans 562 residues: Protein FAM83D-A (562 aa).

The interval 424–471 is disordered; sequence ITTQTTETSQCTTQTPAPTSSVARLSNSSNSSSSSFSSTSITSTGSNC. The segment covering 425 to 471 has biased composition (low complexity); that stretch reads TTQTTETSQCTTQTPAPTSSVARLSNSSNSSSSSFSSTSITSTGSNC.

The protein belongs to the FAM83 family.

The protein resides in the cytoplasm. Its subcellular location is the cytoskeleton. It localises to the spindle. The protein localises to the spindle pole. Functionally, may regulate cell proliferation, growth, migration and epithelial to mesenchymal transition. May also be important for proper chromosome congression and alignment during mitosis. This is Protein FAM83D-A from Xenopus laevis (African clawed frog).